Reading from the N-terminus, the 425-residue chain is UDP-N-acetylglucosamine 1-carboxyvinyltransferase (425 aa).

Residue Lys-22–Asn-23 coordinates phosphoenolpyruvate. UDP-N-acetyl-alpha-D-glucosamine is bound at residue Arg-91. Cys-115 serves as the catalytic Proton donor. Residue Cys-115 is modified to 2-(S-cysteinyl)pyruvic acid O-phosphothioketal. Residues Arg-120 to Leu-124, Asp-305, and Val-327 contribute to the UDP-N-acetyl-alpha-D-glucosamine site.

It belongs to the EPSP synthase family. MurA subfamily.

Its subcellular location is the cytoplasm. It catalyses the reaction phosphoenolpyruvate + UDP-N-acetyl-alpha-D-glucosamine = UDP-N-acetyl-3-O-(1-carboxyvinyl)-alpha-D-glucosamine + phosphate. It participates in cell wall biogenesis; peptidoglycan biosynthesis. Cell wall formation. Adds enolpyruvyl to UDP-N-acetylglucosamine. This Coprothermobacter proteolyticus (strain ATCC 35245 / DSM 5265 / OCM 4 / BT) protein is UDP-N-acetylglucosamine 1-carboxyvinyltransferase.